Reading from the N-terminus, the 386-residue chain is S-adenosylmethionine synthase (386 aa).

His16 contacts ATP. Mg(2+) is bound at residue Asp18. Residue Glu44 participates in K(+) binding. Residues Glu57 and Gln100 each contribute to the L-methionine site. A flexible loop region spans residues 100–110 (QSRDITQGVDR). Residues 165 to 167 (DAK), Asp240, 246 to 247 (RK), Ala263, and Lys267 contribute to the ATP site. Position 240 (Asp240) interacts with L-methionine. Lys271 serves as a coordination point for L-methionine.

This sequence belongs to the AdoMet synthase family. Homotetramer; dimer of dimers. Mg(2+) serves as cofactor. K(+) is required as a cofactor.

Its subcellular location is the cytoplasm. It catalyses the reaction L-methionine + ATP + H2O = S-adenosyl-L-methionine + phosphate + diphosphate. The protein operates within amino-acid biosynthesis; S-adenosyl-L-methionine biosynthesis; S-adenosyl-L-methionine from L-methionine: step 1/1. In terms of biological role, catalyzes the formation of S-adenosylmethionine (AdoMet) from methionine and ATP. The overall synthetic reaction is composed of two sequential steps, AdoMet formation and the subsequent tripolyphosphate hydrolysis which occurs prior to release of AdoMet from the enzyme. The protein is S-adenosylmethionine synthase of Francisella tularensis subsp. tularensis (strain FSC 198).